Consider the following 408-residue polypeptide: Inhibin beta B chain (408 aa).

An N-terminal signal peptide occupies residues 1 to 28 (MDGLPGRALGAACLLMLAVGSLGPGVWG). Residues 29-60 (SPTPPPLPAAPQPPPPPPGAPGGSQDTCTSCG) are disordered. Residues 29–293 (SPTPPPLPAA…GDSRHRIRKR (265 aa)) constitute a propeptide that is removed on maturation. Residues 30 to 48 (PTPPPLPAAPQPPPPPPGA) are compositionally biased toward pro residues. An N-linked (GlcNAc...) asparagine glycan is attached at Asn94. Intrachain disulfides connect Cys297–Cys305, Cys304–Cys373, Cys333–Cys405, and Cys337–Cys407.

Belongs to the TGF-beta family. In terms of assembly, dimeric, linked by one or more disulfide bonds. Inhibin B is a dimer of alpha and beta-B. Activin B is a homodimer of beta-B. Activin AB is a dimer of beta-A and beta-B. Interacts with FST and FSTL3.

The protein resides in the secreted. Inhibins and activins inhibit and activate, respectively, the secretion of follitropin by the pituitary gland. Inhibins/activins are involved in regulating a number of diverse functions such as hypothalamic and pituitary hormone secretion, gonadal hormone secretion, germ cell development and maturation, erythroid differentiation, insulin secretion, nerve cell survival, embryonic axial development or bone growth, depending on their subunit composition. Inhibins appear to oppose the functions of activins. Its function is as follows. Activin B is a dimer of alpha and beta-B that plays a role in several essential biological processes including embryonic development, stem cell maintenance and differentiation, haematopoiesis, cell proliferation and wound healing. Signals through type I receptor ACVR1C, abundantly expressed in pancreatic beta cells, and type II receptors like ACVR2A. Upon ligand binding, these receptors phosphorylate intracellular signaling mediators SMAD2 and SMAD3, which form a complex with SMAD4, translocate to the nucleus, and regulate gene expression. Plays a crucial role in the induction of hepcidin by inflammation through activation of ACVR1C and subsequent phosphorylation of SMAD1/5/8. Regulates adipocyte lipid metabolism by decreasing non-esterified fatty acids and glycerol release and increases intracellular triglyceride content. Stimulates wound healing by promoting cell migration and hair follicle regeneration through the JNK and ERK signaling pathways downstream of RHOA. Functionally, inhibin B is a dimer of alpha and beta-B that plays a crucial role in the regulation of the reproductive system by inhibiting the secretion of follicle-stimulating hormone (FSH) from the anterior pituitary gland. Thereby, maintains reproductive homeostasis in both males and females. Acts as a more potent suppressor of FSH release than inhibin A. Functions as competitive receptor antagonist binding activin type II receptors with high affinity in the presence of the TGF-beta type III coreceptor/TGFBR3L. This chain is Inhibin beta B chain (INHBB), found in Bos taurus (Bovine).